The primary structure comprises 148 residues: Macrodomain Ter protein (148 aa).

It belongs to the MatP family. Homodimer.

It is found in the cytoplasm. In terms of biological role, required for spatial organization of the terminus region of the chromosome (Ter macrodomain) during the cell cycle. Prevents early segregation of duplicated Ter macrodomains during cell division. Binds specifically to matS, which is a 13 bp signature motif repeated within the Ter macrodomain. This Aliivibrio salmonicida (strain LFI1238) (Vibrio salmonicida (strain LFI1238)) protein is Macrodomain Ter protein.